The primary structure comprises 183 residues: Ribosome-recycling factor (183 aa).

This sequence belongs to the RRF family.

It is found in the cytoplasm. Functionally, responsible for the release of ribosomes from messenger RNA at the termination of protein biosynthesis. May increase the efficiency of translation by recycling ribosomes from one round of translation to another. This is Ribosome-recycling factor from Deinococcus deserti (strain DSM 17065 / CIP 109153 / LMG 22923 / VCD115).